Consider the following 343-residue polypeptide: 4-hydroxy-2-oxovalerate aldolase 1 (343 aa).

The region spanning 8 to 260 (VTVHDMTLRD…ETGVDVAKIT (253 aa)) is the Pyruvate carboxyltransferase domain. Substrate is bound at residue 16–17 (RD). Residue Asp17 participates in Mn(2+) binding. His20 serves as the catalytic Proton acceptor. The substrate site is built by Ser170 and His199. Residues His199 and His201 each contribute to the Mn(2+) site. Tyr290 is a binding site for substrate.

The protein belongs to the 4-hydroxy-2-oxovalerate aldolase family.

It carries out the reaction (S)-4-hydroxy-2-oxopentanoate = acetaldehyde + pyruvate. This is 4-hydroxy-2-oxovalerate aldolase 1 from Dechloromonas aromatica (strain RCB).